Here is a 372-residue protein sequence, read N- to C-terminus: Putative glutamate--cysteine ligase 2 (372 aa).

Belongs to the glutamate--cysteine ligase type 2 family. YbdK subfamily.

The catalysed reaction is L-cysteine + L-glutamate + ATP = gamma-L-glutamyl-L-cysteine + ADP + phosphate + H(+). Its function is as follows. ATP-dependent carboxylate-amine ligase which exhibits weak glutamate--cysteine ligase activity. The protein is Putative glutamate--cysteine ligase 2 of Gloeobacter violaceus (strain ATCC 29082 / PCC 7421).